Here is a 495-residue protein sequence, read N- to C-terminus: Cytochrome P450 2E1 (495 aa).

Position 298–303 (Phe-298–Thr-303) interacts with substrate. Cys-437 is a heme binding site.

This sequence belongs to the cytochrome P450 family. As to quaternary structure, interacts with chaperones HSP70 and HSP90; this interaction is required for initial targeting to mitochondria. Heme is required as a cofactor.

The protein resides in the endoplasmic reticulum membrane. The protein localises to the microsome membrane. Its subcellular location is the mitochondrion inner membrane. The enzyme catalyses an organic molecule + reduced [NADPH--hemoprotein reductase] + O2 = an alcohol + oxidized [NADPH--hemoprotein reductase] + H2O + H(+). The catalysed reaction is (5Z,8Z,11Z)-eicosatrienoate + reduced [NADPH--hemoprotein reductase] + O2 = 19-hydroxy-(5Z,8Z,11Z)-eicosatrienoate + oxidized [NADPH--hemoprotein reductase] + H2O + H(+). It carries out the reaction (5Z,8Z,11Z,14Z,17Z)-eicosapentaenoate + reduced [NADPH--hemoprotein reductase] + O2 = 19-hydroxy-(5Z,8Z,11Z,14Z,17Z)-eicosapentaenoate + oxidized [NADPH--hemoprotein reductase] + H2O + H(+). It catalyses the reaction (4Z,7Z,10Z,13Z,16Z,19Z)-docosahexaenoate + reduced [NADPH--hemoprotein reductase] + O2 = 21-hydroxy-(4Z,7Z,10Z,13Z,16Z,19Z)-docosahexaenoate + oxidized [NADPH--hemoprotein reductase] + H2O + H(+). The enzyme catalyses dodecanoate + reduced [NADPH--hemoprotein reductase] + O2 = 11-hydroxydodecanoate + oxidized [NADPH--hemoprotein reductase] + H2O + H(+). The catalysed reaction is tetradecanoate + reduced [NADPH--hemoprotein reductase] + O2 = 13-hydroxytetradecanoate + oxidized [NADPH--hemoprotein reductase] + H2O + H(+). It carries out the reaction 4-nitrophenol + NADPH + O2 + H(+) = 4-nitrocatechol + NADP(+) + H2O. Its pathway is lipid metabolism; fatty acid metabolism. Its activity is regulated as follows. The omega-1 hydroxylase activity is stimulated by cytochrome b5. Functionally, a cytochrome P450 monooxygenase involved in the metabolism of fatty acids. Mechanistically, uses molecular oxygen inserting one oxygen atom into a substrate, and reducing the second into a water molecule, with two electrons provided by NADPH via cytochrome P450 reductase (NADPH--hemoprotein reductase). Catalyzes the hydroxylation of carbon-hydrogen bonds. Hydroxylates fatty acids specifically at the omega-1 position displaying the highest catalytic activity for saturated fatty acids. May be involved in the oxidative metabolism of xenobiotics. The chain is Cytochrome P450 2E1 (CYP2E1) from Sus scrofa (Pig).